A 312-amino-acid polypeptide reads, in one-letter code: Glycine--tRNA ligase alpha subunit (312 aa).

The protein belongs to the class-II aminoacyl-tRNA synthetase family. Tetramer of two alpha and two beta subunits.

It is found in the cytoplasm. The enzyme catalyses tRNA(Gly) + glycine + ATP = glycyl-tRNA(Gly) + AMP + diphosphate. This is Glycine--tRNA ligase alpha subunit from Thiobacillus denitrificans (strain ATCC 25259 / T1).